A 353-amino-acid polypeptide reads, in one-letter code: Dihydroorotate dehydrogenase (quinone) (353 aa).

Residues 67–71 (AGFDK) and Thr-91 each bind FMN. Lys-71 lines the substrate pocket. 116–120 (NRMGF) contacts substrate. FMN contacts are provided by Asn-144 and Asn-177. Asn-177 contributes to the substrate binding site. Ser-180 (nucleophile) is an active-site residue. A substrate-binding site is contributed by Asn-182. FMN contacts are provided by Lys-215 and Thr-243. 244–245 (NT) contacts substrate. Residues Gly-264, Gly-293, and 314 to 315 (YT) each bind FMN.

Belongs to the dihydroorotate dehydrogenase family. Type 2 subfamily. As to quaternary structure, monomer. The cofactor is FMN.

Its subcellular location is the cell membrane. The enzyme catalyses (S)-dihydroorotate + a quinone = orotate + a quinol. The protein operates within pyrimidine metabolism; UMP biosynthesis via de novo pathway; orotate from (S)-dihydroorotate (quinone route): step 1/1. Its function is as follows. Catalyzes the conversion of dihydroorotate to orotate with quinone as electron acceptor. The sequence is that of Dihydroorotate dehydrogenase (quinone) from Gloeobacter violaceus (strain ATCC 29082 / PCC 7421).